The primary structure comprises 366 residues: Phenylalanine--tRNA ligase alpha subunit (366 aa).

Glutamate 264 serves as a coordination point for Mg(2+).

It belongs to the class-II aminoacyl-tRNA synthetase family. Phe-tRNA synthetase alpha subunit type 1 subfamily. Tetramer of two alpha and two beta subunits. Mg(2+) serves as cofactor.

The protein resides in the cytoplasm. The catalysed reaction is tRNA(Phe) + L-phenylalanine + ATP = L-phenylalanyl-tRNA(Phe) + AMP + diphosphate + H(+). This chain is Phenylalanine--tRNA ligase alpha subunit, found in Zymomonas mobilis subsp. mobilis (strain ATCC 31821 / ZM4 / CP4).